Consider the following 321-residue polypeptide: MDQAEYFHSWCRQDEMMLNLLEKCPTQQIQRLPLPIRRLEKKQEIQKMLEARREDYHKAMEGVAREWEKLQEKEAEIRVGLEKYKKSIVKNDKKQERAFRDAAKARSMCIQYDLQLKALQEQCEELDKKRAKTKAQVQKYEKCHRYLEKVVKASEKFQSIPELMSQFHALVSYLPQEEQEEQKSQESRSQRIHCMEEKSDSIVQFSNEIHRLYIRLEKAKKKRREWELRWNQMLKTATRKNLLLGTIKAAVRDIFQTVISQGLGSNSVGEDDIVEQLEIIRKDIEDLTDIWEKLSLNEELMEPIRAPLLPTDKTLGHPPSQ.

2 coiled-coil regions span residues 36-144 (IRRL…EKCH) and 202-229 (IVQF…WELR).

It belongs to the CFAP73 family.

In Xenopus laevis (African clawed frog), this protein is Coiled-coil domain-containing protein 42-like 1.